We begin with the raw amino-acid sequence, 251 residues long: Ubiquinone/menaquinone biosynthesis C-methyltransferase UbiE (251 aa).

Residues threonine 74, aspartate 95, and 123 to 124 (DA) contribute to the S-adenosyl-L-methionine site.

It belongs to the class I-like SAM-binding methyltransferase superfamily. MenG/UbiE family.

The catalysed reaction is a 2-demethylmenaquinol + S-adenosyl-L-methionine = a menaquinol + S-adenosyl-L-homocysteine + H(+). It carries out the reaction a 2-methoxy-6-(all-trans-polyprenyl)benzene-1,4-diol + S-adenosyl-L-methionine = a 5-methoxy-2-methyl-3-(all-trans-polyprenyl)benzene-1,4-diol + S-adenosyl-L-homocysteine + H(+). Its pathway is quinol/quinone metabolism; menaquinone biosynthesis; menaquinol from 1,4-dihydroxy-2-naphthoate: step 2/2. It participates in cofactor biosynthesis; ubiquinone biosynthesis. Functionally, methyltransferase required for the conversion of demethylmenaquinol (DMKH2) to menaquinol (MKH2) and the conversion of 2-polyprenyl-6-methoxy-1,4-benzoquinol (DDMQH2) to 2-polyprenyl-3-methyl-6-methoxy-1,4-benzoquinol (DMQH2). The protein is Ubiquinone/menaquinone biosynthesis C-methyltransferase UbiE of Idiomarina loihiensis (strain ATCC BAA-735 / DSM 15497 / L2-TR).